The primary structure comprises 185 residues: Photosystem I assembly protein Ycf4 (185 aa).

2 consecutive transmembrane segments (helical) span residues 21-43 (NFFWACILFLGSLGFLSVGISSY) and 68-90 (FYGIAGLFISSYLCCTILWNVGS).

Belongs to the Ycf4 family.

Its subcellular location is the plastid. The protein localises to the chloroplast thylakoid membrane. Seems to be required for the assembly of the photosystem I complex. The sequence is that of Photosystem I assembly protein Ycf4 from Aegilops tauschii (Tausch's goatgrass).